A 267-amino-acid polypeptide reads, in one-letter code: uncharacterized protein (267 aa).

Residues 17–248 form the ABC transporter domain; it reads LKVENLTKIF…PRDRTSIEFL (232 aa). 53–60 is a binding site for ATP; the sequence is GPSGCGKT.

The protein belongs to the ABC transporter superfamily.

This is an uncharacterized protein from Methanocaldococcus jannaschii (strain ATCC 43067 / DSM 2661 / JAL-1 / JCM 10045 / NBRC 100440) (Methanococcus jannaschii).